A 175-amino-acid polypeptide reads, in one-letter code: ATP synthase subunit b (175 aa).

Residues 19 to 39 (LVVGTIAFALLVFVLLKFVMP) traverse the membrane as a helical segment.

Belongs to the ATPase B chain family. In terms of assembly, F-type ATPases have 2 components, F(1) - the catalytic core - and F(0) - the membrane proton channel. F(1) has five subunits: alpha(3), beta(3), gamma(1), delta(1), epsilon(1). F(0) has three main subunits: a(1), b(2) and c(10-14). The alpha and beta chains form an alternating ring which encloses part of the gamma chain. F(1) is attached to F(0) by a central stalk formed by the gamma and epsilon chains, while a peripheral stalk is formed by the delta and b chains.

The protein localises to the cell membrane. Functionally, f(1)F(0) ATP synthase produces ATP from ADP in the presence of a proton or sodium gradient. F-type ATPases consist of two structural domains, F(1) containing the extramembraneous catalytic core and F(0) containing the membrane proton channel, linked together by a central stalk and a peripheral stalk. During catalysis, ATP synthesis in the catalytic domain of F(1) is coupled via a rotary mechanism of the central stalk subunits to proton translocation. Its function is as follows. Component of the F(0) channel, it forms part of the peripheral stalk, linking F(1) to F(0). The polypeptide is ATP synthase subunit b (Salinispora tropica (strain ATCC BAA-916 / DSM 44818 / JCM 13857 / NBRC 105044 / CNB-440)).